The following is a 357-amino-acid chain: MAGNTIGQLFQVTTFGESHGIALGCIVDGVPPGLSLSEADIQPDLDRRKPGTSRYTTPRREDDEVQILSGVFEGKTTGTSIGMIIKNADQRSQDYGDIKDRFRPGHADFTYQQKYGIRDYRGGGRSSARETAMRVAAGAIAKKYLREHFGVEVRGFLAQIGDVAIAPQVIEQIDWQQVNSNPFFCPDPSAVEKFDELIRQLKKEGDSIGAKLTVVAENVPVGLGEPVFDRLDADLAHALMGINAVKAVEIGDGFAVVNQRGSAHRDEMTPEGFLSNHAGGILGGISSGQPIVATIALKPTSSITIPGRSVNLANEPVEVITKGRHDPCVGIRAVPIAEAMVAIVLLDHLLRHKAQNR.

Residues R48 and R54 each coordinate NADP(+). Residues 125–127 (RSS), 243–244 (NA), G283, 298–302 (KPTSS), and R324 contribute to the FMN site.

The protein belongs to the chorismate synthase family. Homotetramer. FMNH2 is required as a cofactor.

The enzyme catalyses 5-O-(1-carboxyvinyl)-3-phosphoshikimate = chorismate + phosphate. It functions in the pathway metabolic intermediate biosynthesis; chorismate biosynthesis; chorismate from D-erythrose 4-phosphate and phosphoenolpyruvate: step 7/7. In terms of biological role, catalyzes the anti-1,4-elimination of the C-3 phosphate and the C-6 proR hydrogen from 5-enolpyruvylshikimate-3-phosphate (EPSP) to yield chorismate, which is the branch point compound that serves as the starting substrate for the three terminal pathways of aromatic amino acid biosynthesis. This reaction introduces a second double bond into the aromatic ring system. The protein is Chorismate synthase of Pasteurella multocida (strain Pm70).